Reading from the N-terminus, the 568-residue chain is Involucrin (568 aa).

2 disordered regions span residues 23–499 (CSPA…EKEL) and 517–568 (RKKH…HEVQ). Residues 25 to 36 (PAQTQQEQTKQP) show a composition bias toward low complexity. Residues 49-77 (TQEKGFPKHEEKEANPVKDLPEQESEHHQ) show a composition bias toward basic and acidic residues. Over residues 78–88 (QPGPQKQQLQV) the composition is skewed to low complexity. Over residues 89-106 (KKPEQELQEQELHSEKQP) the composition is skewed to basic and acidic residues. 3 stretches are compositionally biased toward low complexity: residues 107 to 121 (QEPQGLLCLGQQQQR), 133 to 154 (HQQPQQESQGQGLCLGQQQDVL), and 172 to 181 (PELPLGQQQK). Residues 193-213 (KQQKLHLVERHQEPQEQELHH) show a composition bias toward basic and acidic residues. Residues 217–232 (QKQQQPQEQELQLVQH) are compositionally biased toward low complexity. 2 stretches are compositionally biased toward basic and acidic residues: residues 266 to 333 (ESHE…HQET) and 345 to 456 (KPHE…HLGK). Residues 457–467 (QQEQQIEYEGY) are compositionally biased toward low complexity. The residue at position 472 (serine 472) is a Phosphoserine. Composition is skewed to basic and acidic residues over residues 478–499 (KQEKASRGQELDDSHLEQEKEL), 517–532 (RKKHKLENLTQKEKQI), and 551–568 (VKEDSLTTKKQQHSHEVQ).

It belongs to the involucrin family. Directly or indirectly cross-linked to cornifelin (CNFN). Substrate of transglutaminase. Specific glutamines or lysines are cross-linked to keratins, desmoplakin and to inter involucrin molecules. Keratinocytes of epidermis and other stratified squamous epithelia.

It localises to the cytoplasm. In terms of biological role, part of the insoluble cornified cell envelope (CE) of stratified squamous epithelia. This chain is Involucrin (Ivl), found in Rattus norvegicus (Rat).